Reading from the N-terminus, the 126-residue chain is Small ribosomal subunit protein uS13 (126 aa).

A disordered region spans residues 92–126; it reads HRRGLPVRGQRTKTNARTRKGPKKTVAGKKKATRK.

It belongs to the universal ribosomal protein uS13 family. As to quaternary structure, part of the 30S ribosomal subunit. Forms a loose heterodimer with protein S19. Forms two bridges to the 50S subunit in the 70S ribosome.

In terms of biological role, located at the top of the head of the 30S subunit, it contacts several helices of the 16S rRNA. In the 70S ribosome it contacts the 23S rRNA (bridge B1a) and protein L5 of the 50S subunit (bridge B1b), connecting the 2 subunits; these bridges are implicated in subunit movement. Contacts the tRNAs in the A and P-sites. The polypeptide is Small ribosomal subunit protein uS13 (Deinococcus radiodurans (strain ATCC 13939 / DSM 20539 / JCM 16871 / CCUG 27074 / LMG 4051 / NBRC 15346 / NCIMB 9279 / VKM B-1422 / R1)).